We begin with the raw amino-acid sequence, 367 residues long: Glutamate 5-kinase 2 (367 aa).

Lysine 10 contacts ATP. Substrate is bound by residues serine 50, aspartate 136, and asparagine 148. ATP contacts are provided by residues 168 to 169 (TD) and 210 to 216 (TGGMATK). The PUA domain maps to 275-353 (SGQIVIDAGA…KQIGELLDYD (79 aa)).

It belongs to the glutamate 5-kinase family.

The protein localises to the cytoplasm. It carries out the reaction L-glutamate + ATP = L-glutamyl 5-phosphate + ADP. It participates in amino-acid biosynthesis; L-proline biosynthesis; L-glutamate 5-semialdehyde from L-glutamate: step 1/2. In terms of biological role, catalyzes the transfer of a phosphate group to glutamate to form L-glutamate 5-phosphate. In Pseudoalteromonas translucida (strain TAC 125), this protein is Glutamate 5-kinase 2.